The sequence spans 1001 residues: Translation initiation factor IF-2 (1001 aa).

The segment at 34-404 (KSHSSTISES…SRGDRRDRKE (371 aa)) is disordered. The span at 67–80 (SRPESKEDKSDPKQ) shows a compositional bias: basic and acidic residues. Composition is skewed to pro residues over residues 98 to 107 (PARPTPPPRP), 147 to 157 (PTQPLAPPPVP), and 163 to 172 (PSKPAPPTPP). The span at 173–190 (AKKAAPAPRLAGPPGRTA) shows a compositional bias: low complexity. Composition is skewed to basic and acidic residues over residues 212–230 (SLKD…EEKV) and 238–252 (PKPK…PPRP). Positions 332-342 (DDDDDDLDIDG) are enriched in acidic residues. Composition is skewed to low complexity over residues 362-371 (KSLAAKPSTP) and 385-394 (AGSSAGGSSR). Over residues 395 to 404 (SRGDRRDRKE) the composition is skewed to basic and acidic residues. Residues 493-666 (RRPPVVTIMG…LLVSEVEELV (174 aa)) form the tr-type G domain. A G1 region spans residues 502 to 509 (GHVDHGKT). A GTP-binding site is contributed by 502 to 509 (GHVDHGKT). The tract at residues 527 to 531 (GITQH) is G2. The interval 552–555 (DTPG) is G3. GTP contacts are provided by residues 552–556 (DTPGH) and 606–609 (NKVD). Residues 606-609 (NKVD) form a G4 region. The interval 642 to 644 (SAL) is G5.

Belongs to the TRAFAC class translation factor GTPase superfamily. Classic translation factor GTPase family. IF-2 subfamily.

It is found in the cytoplasm. In terms of biological role, one of the essential components for the initiation of protein synthesis. Protects formylmethionyl-tRNA from spontaneous hydrolysis and promotes its binding to the 30S ribosomal subunits. Also involved in the hydrolysis of GTP during the formation of the 70S ribosomal complex. This chain is Translation initiation factor IF-2 (infB), found in Synechocystis sp. (strain ATCC 27184 / PCC 6803 / Kazusa).